The sequence spans 610 residues: Autophagy-related protein 22-1 (610 aa).

The span at 1–11 (MAFTPSSPPSP) shows a compositional bias: pro residues. Residues 1 to 29 (MAFTPSSPPSPAADASQRPSRYPGEDTTP) are disordered. Residues 35–55 (ILGWYAYGIAAEVFAVCGVGS) traverse the membrane as a helical segment. Residue asparagine 90 is glycosylated (N-linked (GlcNAc...) asparagine). Transmembrane regions (helical) follow at residues 120–140 (SFAM…LISF), 152–171 (TLLL…FVFV), and 189–209 (CLGS…ANDP). Residues 229 to 265 (GQFEPRDSFSERNPEFESQYTPGIGLGSKPSTNATSP) are disordered. Basic and acidic residues predominate over residues 232 to 243 (EPRDSFSERNPE). Residue asparagine 261 is glycosylated (N-linked (GlcNAc...) asparagine). The next 8 membrane-spanning stretches (helical) occupy residues 278-298 (VGLG…LLFA), 310-330 (TLPL…FTMV), 384-404 (VFLV…GTAI), 418-438 (VGCL…LWPV), 453-473 (LCIA…IPLF), 488-510 (FPLA…SFFG), 522-544 (YALY…GMLI), and 553-573 (GFFF…MVNA). Residues 588 to 610 (AKGQESETGEPGEEAEGLLARGA) form a disordered region. Positions 594–603 (ETGEPGEEAE) are enriched in acidic residues.

It belongs to the ATG22 family.

The protein resides in the vacuole membrane. Vacuolar effluxer which mediate the efflux of amino acids resulting from autophagic degradation. The release of autophagic amino acids allows the maintenance of protein synthesis and viability during nitrogen starvation. The chain is Autophagy-related protein 22-1 (atg22-1) from Aspergillus terreus (strain NIH 2624 / FGSC A1156).